The chain runs to 371 residues: Neutral protease 2 homolog MGYG_03465 (371 aa).

The signal sequence occupies residues 1 to 19; sequence MQFVAVLAALGALVAPAAA. Residues 20–188 constitute a propeptide that is removed on maturation; it reads YPHAPMNETL…SIHARALEKR (169 aa). 2 cysteine pairs are disulfide-bonded: cysteine 196–cysteine 267 and cysteine 274–cysteine 292. Histidine 316 lines the Zn(2+) pocket. The active site involves glutamate 317. 2 residues coordinate Zn(2+): histidine 320 and aspartate 331.

It belongs to the peptidase M35 family. It depends on Zn(2+) as a cofactor.

Its subcellular location is the secreted. The enzyme catalyses Preferential cleavage of bonds with hydrophobic residues in P1'. Also 3-Asn-|-Gln-4 and 8-Gly-|-Ser-9 bonds in insulin B chain.. Its function is as follows. Secreted metalloproteinase that allows assimilation of proteinaceous substrates. Shows high activities on basic nuclear substrates such as histone and protamine. May be involved in virulence. The protein is Neutral protease 2 homolog MGYG_03465 of Arthroderma gypseum (strain ATCC MYA-4604 / CBS 118893) (Microsporum gypseum).